We begin with the raw amino-acid sequence, 95 residues long: Pyrimidine/purine nucleoside phosphorylase (95 aa).

The protein belongs to the nucleoside phosphorylase PpnP family.

The enzyme catalyses a purine D-ribonucleoside + phosphate = a purine nucleobase + alpha-D-ribose 1-phosphate. The catalysed reaction is adenosine + phosphate = alpha-D-ribose 1-phosphate + adenine. It catalyses the reaction cytidine + phosphate = cytosine + alpha-D-ribose 1-phosphate. It carries out the reaction guanosine + phosphate = alpha-D-ribose 1-phosphate + guanine. The enzyme catalyses inosine + phosphate = alpha-D-ribose 1-phosphate + hypoxanthine. The catalysed reaction is thymidine + phosphate = 2-deoxy-alpha-D-ribose 1-phosphate + thymine. It catalyses the reaction uridine + phosphate = alpha-D-ribose 1-phosphate + uracil. It carries out the reaction xanthosine + phosphate = alpha-D-ribose 1-phosphate + xanthine. Functionally, catalyzes the phosphorolysis of diverse nucleosides, yielding D-ribose 1-phosphate and the respective free bases. Can use uridine, adenosine, guanosine, cytidine, thymidine, inosine and xanthosine as substrates. Also catalyzes the reverse reactions. This Yersinia enterocolitica serotype O:8 / biotype 1B (strain NCTC 13174 / 8081) protein is Pyrimidine/purine nucleoside phosphorylase.